The following is a 322-amino-acid chain: MTSPSTIKQKFIAKGHQLGVVAVGFSDGQPNQGVDPSGLIEAGLLDQLRDDLEYDIRHDGKVHTYAEFVPEHDPNHRGMKKPRTVSAATQQLSRQVYEHAREGRLVLTLGGDHSIAIGTISGTAKAIRERLGREMAVIWVDAHADINRPEDSDSGNIHGMPLAFLTGLAKDDNEDMFGWLQPDNLISPRKLVYIGLRDVDRAEKRLLKEHGIKAFSMHDIDKYGIGRVVEMALAHIGQDTPIHLSFDVDALDPQWAPSTGTPVRGGLTLREGDFIAESIHETGSLVAMDLVEVNPTLETLGASETIRAGCSLVRSALGDTLL.

Residues His113, Asp141, His143, and Asp145 each contribute to the Mn(2+) site. Residues 143–147 (HADIN), 154–156 (SGN), and Asp200 contribute to the substrate site. Mn(2+)-binding residues include Asp247 and Asp249. 2 residues coordinate substrate: Thr261 and Glu292.

It belongs to the arginase family. As to quaternary structure, homotrimer. The cofactor is Mn(2+).

The enzyme catalyses L-arginine + H2O = urea + L-ornithine. Its pathway is nitrogen metabolism; urea cycle; L-ornithine and urea from L-arginine: step 1/1. The polypeptide is Arginase (ARG) (Coccidioides immitis (strain RS) (Valley fever fungus)).